Here is a 31-residue protein sequence, read N- to C-terminus: Cytochrome b6-f complex subunit 6 (31 aa).

Residues 3-23 (AIVAYIGFLALFTGIAAGLLF) traverse the membrane as a helical segment.

The protein belongs to the PetL family. The 4 large subunits of the cytochrome b6-f complex are cytochrome b6, subunit IV (17 kDa polypeptide, PetD), cytochrome f and the Rieske protein, while the 4 small subunits are PetG, PetL, PetM and PetN. The complex functions as a dimer.

The protein localises to the cellular thylakoid membrane. In terms of biological role, component of the cytochrome b6-f complex, which mediates electron transfer between photosystem II (PSII) and photosystem I (PSI), cyclic electron flow around PSI, and state transitions. PetL is important for photoautotrophic growth as well as for electron transfer efficiency and stability of the cytochrome b6-f complex. The polypeptide is Cytochrome b6-f complex subunit 6 (Nostoc sp. (strain PCC 7120 / SAG 25.82 / UTEX 2576)).